The sequence spans 414 residues: MKFRSILAIFGDFRPKSLGIALFGAILFSLFIYLHHFGITSPLLYSLLALLALAFYLKLPRESGFAFGFWVGIAWFYWMALSFRYYELTYLIPFILLGIGGVYGVLFSMALYLKNPLVRALLLWLLSHVQPFGFDWMVPEVMLVPSLLDSSKLSFGLILLSLSLFWLLPQRWLKPLPLLLLPFTLYSKPFSPSLPPFEVEIIETHIPQEIRWEREARARIIEENLKRIDAAILEGKALILFPETAFPLLLNKEDWVLEHLAQKSQEIAIITGALRAEEGEIYNSTYFFHQGRIEVADKIVLVPFGEKIPLPDFLVKPLNRLFFGGAQDYRASASKPVDFELHGVKLRNAICYEATSAILYEGSPQFMVVGSNNAWFYPSIEPALQRLLLGYYAREHRTTILHAANRSPSGIIAP.

A run of 6 helical transmembrane segments spans residues 19–39 (GIAL…HFGI), 40–60 (TSPL…LKLP), 63–83 (SGFA…ALSF), 91–111 (LIPF…SMAL), 121–141 (LLLW…VPEV), and 153–173 (LSFG…QRWL). One can recognise a CN hydrolase domain in the interval 202-414 (IETHIPQEIR…NRSPSGIIAP (213 aa)). Catalysis depends on E243, which acts as the Proton acceptor. K298 is an active-site residue. The Nucleophile role is filled by C351.

Belongs to the CN hydrolase family. Apolipoprotein N-acyltransferase subfamily.

It localises to the cell inner membrane. It carries out the reaction N-terminal S-1,2-diacyl-sn-glyceryl-L-cysteinyl-[lipoprotein] + a glycerophospholipid = N-acyl-S-1,2-diacyl-sn-glyceryl-L-cysteinyl-[lipoprotein] + a 2-acyl-sn-glycero-3-phospholipid + H(+). The protein operates within protein modification; lipoprotein biosynthesis (N-acyl transfer). Its function is as follows. Catalyzes the phospholipid dependent N-acylation of the N-terminal cysteine of apolipoprotein, the last step in lipoprotein maturation. In Wolinella succinogenes (strain ATCC 29543 / DSM 1740 / CCUG 13145 / JCM 31913 / LMG 7466 / NCTC 11488 / FDC 602W) (Vibrio succinogenes), this protein is Apolipoprotein N-acyltransferase.